The chain runs to 64 residues: Putative antitoxin VapB4 (64 aa).

The protein belongs to the UPF0165 family.

Its function is as follows. Possibly the antitoxin component of a type II toxin-antitoxin (TA) system. Its cognate toxin is VapC4 (Potential). The polypeptide is Putative antitoxin VapB4 (vapB4) (Archaeoglobus fulgidus (strain ATCC 49558 / DSM 4304 / JCM 9628 / NBRC 100126 / VC-16)).